We begin with the raw amino-acid sequence, 274 residues long: Diaminopimelate epimerase (274 aa).

Substrate contacts are provided by Asn11, Gln44, and Asn64. Residue Cys73 is the Proton donor of the active site. Substrate is bound by residues 74–75 (GN), Asn157, Asn190, and 208–209 (ER). The Proton acceptor role is filled by Cys217. Residue 218-219 (GS) participates in substrate binding.

Belongs to the diaminopimelate epimerase family. In terms of assembly, homodimer.

It localises to the cytoplasm. It catalyses the reaction (2S,6S)-2,6-diaminopimelate = meso-2,6-diaminopimelate. Its pathway is amino-acid biosynthesis; L-lysine biosynthesis via DAP pathway; DL-2,6-diaminopimelate from LL-2,6-diaminopimelate: step 1/1. Catalyzes the stereoinversion of LL-2,6-diaminopimelate (L,L-DAP) to meso-diaminopimelate (meso-DAP), a precursor of L-lysine and an essential component of the bacterial peptidoglycan. This Cronobacter sakazakii (strain ATCC BAA-894) (Enterobacter sakazakii) protein is Diaminopimelate epimerase.